Reading from the N-terminus, the 203-residue chain is Protein GrpE (203 aa).

Residues 1–10 (MSNESIKAEQ) show a composition bias toward basic and acidic residues. Residues 1 to 20 (MSNESIKAEQDLIQEGVESE) are disordered.

The protein belongs to the GrpE family. Homodimer.

The protein localises to the cytoplasm. In terms of biological role, participates actively in the response to hyperosmotic and heat shock by preventing the aggregation of stress-denatured proteins, in association with DnaK and GrpE. It is the nucleotide exchange factor for DnaK and may function as a thermosensor. Unfolded proteins bind initially to DnaJ; upon interaction with the DnaJ-bound protein, DnaK hydrolyzes its bound ATP, resulting in the formation of a stable complex. GrpE releases ADP from DnaK; ATP binding to DnaK triggers the release of the substrate protein, thus completing the reaction cycle. Several rounds of ATP-dependent interactions between DnaJ, DnaK and GrpE are required for fully efficient folding. The sequence is that of Protein GrpE from Shewanella sp. (strain MR-7).